We begin with the raw amino-acid sequence, 110 residues long: Nucleoid-associated protein PsycPRwf_1729 (110 aa).

This sequence belongs to the YbaB/EbfC family. Homodimer.

It localises to the cytoplasm. Its subcellular location is the nucleoid. In terms of biological role, binds to DNA and alters its conformation. May be involved in regulation of gene expression, nucleoid organization and DNA protection. The polypeptide is Nucleoid-associated protein PsycPRwf_1729 (Psychrobacter sp. (strain PRwf-1)).